A 668-amino-acid chain; its full sequence is DNA-directed RNA polymerase subunit beta' (668 aa).

4 residues coordinate Zn(2+): cysteine 71, cysteine 73, cysteine 91, and cysteine 94. The Mg(2+) site is built by aspartate 505, aspartate 507, and aspartate 509.

Belongs to the RNA polymerase beta' chain family. RpoC1 subfamily. In terms of assembly, in plastids the minimal PEP RNA polymerase catalytic core is composed of four subunits: alpha, beta, beta', and beta''. When a (nuclear-encoded) sigma factor is associated with the core the holoenzyme is formed, which can initiate transcription. The cofactor is Mg(2+). Zn(2+) is required as a cofactor.

Its subcellular location is the plastid. It is found in the chloroplast. The catalysed reaction is RNA(n) + a ribonucleoside 5'-triphosphate = RNA(n+1) + diphosphate. Its function is as follows. DNA-dependent RNA polymerase catalyzes the transcription of DNA into RNA using the four ribonucleoside triphosphates as substrates. This Mesostigma viride (Green alga) protein is DNA-directed RNA polymerase subunit beta'.